A 319-amino-acid chain; its full sequence is Transcriptional regulator LsrR (319 aa).

A DNA-binding region (H-T-H motif) is located at residues 32–55; that stretch reads QSEISERLGLTRLKVSRLLEKGHQ.

Belongs to the SorC transcriptional regulatory family.

The protein localises to the cytoplasm. With respect to regulation, inactivated by phosphorylated autoinducer-2 (phospho-AI-2). Phospho-AI-2 acts by binding to LsrR, which is then unable to bind to the promoter regions, allowing the transcription of the target genes. Its function is as follows. Transcriptional regulator that represses the expression of the lsr operon (lsrACDBFGE) in the absence of the quorum-sensing signaling molecule autoinducer 2 (AI-2). It also represses the expression of the lsrRK operon. Acts by binding to the intergenic region between the lsr operon and lsrR. In the presence of phosphorylated autoinducer-2 (phospho-AI-2), LsrR is inactivated, leading to the transcription of the genes. The regulatory function of LsrR was thought to be limited to the lsr operon, but it was subsequently shown to be involved, directly or indirectly, in the regulation of SPI-1 and flagella genes. It negatively regulates the expression of those genes, which reduces the ability of Salmonella to invade host cells. This chain is Transcriptional regulator LsrR, found in Salmonella typhimurium (strain LT2 / SGSC1412 / ATCC 700720).